Here is a 352-residue protein sequence, read N- to C-terminus: Quinolinate synthase (352 aa).

Residues H48 and S69 each contribute to the iminosuccinate site. C114 is a [4Fe-4S] cluster binding site. Iminosuccinate is bound by residues 140 to 142 and S157; that span reads YAN. C201 lines the [4Fe-4S] cluster pocket. Iminosuccinate-binding positions include 227–229 and T244; that span reads HPE. C298 lines the [4Fe-4S] cluster pocket.

The protein belongs to the quinolinate synthase family. Type 1 subfamily. Requires [4Fe-4S] cluster as cofactor.

It is found in the cytoplasm. The catalysed reaction is iminosuccinate + dihydroxyacetone phosphate = quinolinate + phosphate + 2 H2O + H(+). Its pathway is cofactor biosynthesis; NAD(+) biosynthesis; quinolinate from iminoaspartate: step 1/1. Its function is as follows. Catalyzes the condensation of iminoaspartate with dihydroxyacetone phosphate to form quinolinate. The sequence is that of Quinolinate synthase from Pseudomonas entomophila (strain L48).